Reading from the N-terminus, the 574-residue chain is Frizzled and smoothened-like protein G (574 aa).

Residues 1 to 19 form the signal peptide; that stretch reads MKSIIFITFFIFFLKKLNG. The Extracellular portion of the chain corresponds to 20 to 246; the sequence is LPNGYGVGLV…EKWNQIENLS (227 aa). In terms of domain architecture, FZ spans 30 to 181; the sequence is DPNGQCMNYI…GLYEVPCFNP (152 aa). 4 cysteine pairs are disulfide-bonded: Cys35–Cys109, Cys48–Cys102, Cys91–Cys138, and Cys127–Cys178. Residues Asn119, Asn161, Asn187, Asn206, Asn233, and Asn244 are each glycosylated (N-linked (GlcNAc...) asparagine). The helical transmembrane segment at 247-267 threads the bilayer; that stretch reads KVLSTISFVCSIYNILSFGIL. Residues 268–273 lie on the Cytoplasmic side of the membrane; the sequence is KKKKTK. Residues 274-294 form a helical membrane-spanning segment; it reads YTICISALSASVALINLGDII. The Extracellular segment spans residues 295–324; that stretch reads KIGVGYEKVLCPEPGRFATQVDDPLCGLTA. The chain crosses the membrane as a helical span at residues 325–345; that stretch reads ALFHVGICSTVLWTTTMAIYL. At 346–358 the chain is on the cytoplasmic side; the sequence is YSAIKNIKLFKFR. Residues 359–379 form a helical membrane-spanning segment; sequence YFIIFNTGFSLTSLIIAASAS. Topologically, residues 380–401 are extracellular; the sequence is KFEAGTGSIECWIRDRWYSICL. A helical transmembrane segment spans residues 402–422; the sequence is FWLPCGICLLIGTICIASVIV. The Cytoplasmic portion of the chain corresponds to 423–445; sequence EIYKVSKNIKLSESETIMRQIKP. Residues 446–466 traverse the membrane as a helical segment; the sequence is IISVILVSGSFTYLFIIFFDI. The Extracellular portion of the chain corresponds to 467 to 502; sequence ERNFGGYRSAVTDYVLCLLNSTDNGIECHTSGPSYN. N-linked (GlcNAc...) asparagine glycosylation occurs at Asn486. A helical membrane pass occupies residues 503–523; the sequence is PYFMFYFFMRFFGILFFLIYG. Topologically, residues 524 to 574 are cytoplasmic; sequence TSKNARDSWYELFIKIKVSLSETSSTISNNSGGGSSQQKQQQQNEIKLEKI. Over residues 550 to 568 the composition is skewed to low complexity; it reads ISNNSGGGSSQQKQQQQNE. Residues 550–574 form a disordered region; that stretch reads ISNNSGGGSSQQKQQQQNEIKLEKI.

The protein belongs to the G-protein coupled receptor Fz/Smo family.

The protein resides in the membrane. In Dictyostelium discoideum (Social amoeba), this protein is Frizzled and smoothened-like protein G (fslG).